The following is a 449-amino-acid chain: Phosphoglucosamine mutase (449 aa).

Ser100 (phosphoserine intermediate) is an active-site residue. Mg(2+) is bound by residues Ser100, Asp240, Asp242, and Asp244. Ser100 is modified (phosphoserine).

The protein belongs to the phosphohexose mutase family. Mg(2+) is required as a cofactor. Activated by phosphorylation.

It carries out the reaction alpha-D-glucosamine 1-phosphate = D-glucosamine 6-phosphate. Catalyzes the conversion of glucosamine-6-phosphate to glucosamine-1-phosphate. The protein is Phosphoglucosamine mutase of Clostridium novyi (strain NT).